The sequence spans 268 residues: Tryptophan synthase alpha chain (268 aa).

Active-site proton acceptor residues include Glu-49 and Asp-60.

Belongs to the TrpA family. As to quaternary structure, tetramer of two alpha and two beta chains.

The enzyme catalyses (1S,2R)-1-C-(indol-3-yl)glycerol 3-phosphate + L-serine = D-glyceraldehyde 3-phosphate + L-tryptophan + H2O. It functions in the pathway amino-acid biosynthesis; L-tryptophan biosynthesis; L-tryptophan from chorismate: step 5/5. In terms of biological role, the alpha subunit is responsible for the aldol cleavage of indoleglycerol phosphate to indole and glyceraldehyde 3-phosphate. The protein is Tryptophan synthase alpha chain of Vibrio metschnikovii.